The sequence spans 479 residues: Ribulose bisphosphate carboxylase large chain (479 aa).

Residues 1-2 (MS) constitute a propeptide that is removed on maturation. P3 carries the N-acetylproline modification. K14 is subject to N6,N6,N6-trimethyllysine. N123 and T173 together coordinate substrate. K175 functions as the Proton acceptor in the catalytic mechanism. K177 contributes to the substrate binding site. K201, D203, and E204 together coordinate Mg(2+). An N6-carboxylysine modification is found at K201. The active-site Proton acceptor is H294. Substrate-binding residues include R295, H327, and S379.

The protein belongs to the RuBisCO large chain family. Type I subfamily. In terms of assembly, heterohexadecamer of 8 large chains and 8 small chains; disulfide-linked. The disulfide link is formed within the large subunit homodimers. It depends on Mg(2+) as a cofactor. Post-translationally, the disulfide bond which can form in the large chain dimeric partners within the hexadecamer appears to be associated with oxidative stress and protein turnover.

The protein resides in the plastid. It localises to the chloroplast. It carries out the reaction 2 (2R)-3-phosphoglycerate + 2 H(+) = D-ribulose 1,5-bisphosphate + CO2 + H2O. The enzyme catalyses D-ribulose 1,5-bisphosphate + O2 = 2-phosphoglycolate + (2R)-3-phosphoglycerate + 2 H(+). Functionally, ruBisCO catalyzes two reactions: the carboxylation of D-ribulose 1,5-bisphosphate, the primary event in carbon dioxide fixation, as well as the oxidative fragmentation of the pentose substrate in the photorespiration process. Both reactions occur simultaneously and in competition at the same active site. In Ananas comosus (Pineapple), this protein is Ribulose bisphosphate carboxylase large chain.